The following is a 251-amino-acid chain: Pyrroloquinoline-quinone synthase (251 aa).

Belongs to the PqqC family.

The catalysed reaction is 6-(2-amino-2-carboxyethyl)-7,8-dioxo-1,2,3,4,7,8-hexahydroquinoline-2,4-dicarboxylate + 3 O2 = pyrroloquinoline quinone + 2 H2O2 + 2 H2O + H(+). It participates in cofactor biosynthesis; pyrroloquinoline quinone biosynthesis. Functionally, ring cyclization and eight-electron oxidation of 3a-(2-amino-2-carboxyethyl)-4,5-dioxo-4,5,6,7,8,9-hexahydroquinoline-7,9-dicarboxylic-acid to PQQ. The protein is Pyrroloquinoline-quinone synthase of Pseudomonas putida (strain W619).